A 340-amino-acid polypeptide reads, in one-letter code: Glycerol-3-phosphate dehydrogenase [NAD(P)+] (340 aa).

Residues Ser13, Trp14, and Lys108 each coordinate NADPH. The sn-glycerol 3-phosphate site is built by Lys108, Gly139, and Ser141. Ala143 contacts NADPH. Sn-glycerol 3-phosphate is bound by residues Lys194, Asp247, Ser257, Arg258, and Asn259. Lys194 serves as the catalytic Proton acceptor. An NADPH-binding site is contributed by Arg258. Residues Val282 and Glu284 each contribute to the NADPH site.

Belongs to the NAD-dependent glycerol-3-phosphate dehydrogenase family.

The protein localises to the cytoplasm. It carries out the reaction sn-glycerol 3-phosphate + NAD(+) = dihydroxyacetone phosphate + NADH + H(+). It catalyses the reaction sn-glycerol 3-phosphate + NADP(+) = dihydroxyacetone phosphate + NADPH + H(+). It participates in membrane lipid metabolism; glycerophospholipid metabolism. Functionally, catalyzes the reduction of the glycolytic intermediate dihydroxyacetone phosphate (DHAP) to sn-glycerol 3-phosphate (G3P), the key precursor for phospholipid synthesis. This Streptococcus thermophilus (strain CNRZ 1066) protein is Glycerol-3-phosphate dehydrogenase [NAD(P)+].